We begin with the raw amino-acid sequence, 184 residues long: Putative lyase MJ0807 (184 aa).

This sequence belongs to the chorismate pyruvate-lyase type 2 family.

The chain is Putative lyase MJ0807 from Methanocaldococcus jannaschii (strain ATCC 43067 / DSM 2661 / JAL-1 / JCM 10045 / NBRC 100440) (Methanococcus jannaschii).